A 729-amino-acid chain; its full sequence is MGTPGSGRKRTQIKDRFSAEDEALSHIAREAEARLAAKRAARAEARDIRMRELERQQKELTHRYHDKKWGQIQKWMEDSDHARHLQRSSHRHSMASSRVTPNHRSSSVDVSGSHRGRESISRRRDSVYNTLKDSSRRTSNSYSNSYDVKNTTSSSHRDLLSGLYHDQRKYSSLKYNKPISTHHIRSSSLYSEPLATKRTYGTSLYKDGLYNASSSRAPSEYSCYSSRASSARSSPVCSDDEGSVSYSSCRGRRDSVSSDFSDQSESAADYFSRSNRRGSIVSDVDDVSIPDLNSLDEKTDKQFTTENYSRPSSRNATSGIPGTFTPLSGSSSRRGSGDASCSLDPDASLSELRDIYDLKDQIQDVEGRYMQGLKELRESLAEVEEKYKKAMVSNAQLDNEKSNLVYHVDTLKDVIEEMEEQMAEYHRENEEKSKELERQKHNCSILQHKLDEHKEGIRQRDEFIEENQRMQQRVDSLVREVYDLQETINWKDKKIGALERQKEYFDCIKNERDELRDELTAVKEKVKIGEKHGLVIIPDGTPNGDINHEPMVGAITVVSQEAAHVLESAGEGPLDVRLRKLAEEKEELVAQIRKLKLQKDDERQKSAKNNSTTTDPTGLENGSDLQLIEMQRDANRQISEYKFRLSKSEQDITTLEQNVMRLEGQVVRYKSAAENAEKVEDELKAEKRRLQRELRTALDKMEEMEMTNNHLVKRLEKMKANRTALLSQQ.

A coiled-coil region spans residues 27-69 (IAREAEARLAAKRAARAEARDIRMRELERQQKELTHRYHDKKW). Disordered regions lie at residues 80 to 156 (DHAR…SSSH), 230 to 268 (SARS…ESAA), and 289 to 344 (IPDL…CSLD). Residues 84–93 (HLQRSSHRHS) show a composition bias toward basic residues. The segment covering 99 to 110 (VTPNHRSSSVDV) has biased composition (polar residues). The segment covering 115-126 (RGRESISRRRDS) has biased composition (basic and acidic residues). Low complexity-rich tracts occupy residues 137-147 (RTSNSYSNSYD) and 257-268 (SSDFSDQSESAA). Positions 304–320 (TTENYSRPSSRNATSGI) are enriched in polar residues. Coiled coils occupy residues 357 to 531 (DLKD…IGEK) and 574 to 722 (LDVR…KANR). The interval 600-621 (DDERQKSAKNNSTTTDPTGLEN) is disordered. Over residues 607–616 (AKNNSTTTDP) the composition is skewed to polar residues.

This sequence belongs to the LRRFIP family.

In terms of biological role, may function as activator of the canonical Wnt signaling pathway upstream of ctnnb1/beta-catenin. Might be required for dorsal axis formation. This Xenopus laevis (African clawed frog) protein is Leucine-rich repeat flightless-interacting protein 2 (lrrfip2).